The sequence spans 351 residues: Fe(3+) ions import ATP-binding protein FbpC (351 aa).

One can recognise an ABC transporter domain in the interval 7–237 (VELKNVTKRF…PASEFMASFM (231 aa)). 39-46 (GPSGCGKT) contacts ATP.

The protein belongs to the ABC transporter superfamily. Fe(3+) ion importer (TC 3.A.1.10) family. As to quaternary structure, the complex is composed of two ATP-binding proteins (FbpC), two transmembrane proteins (FbpB) and a solute-binding protein (FbpA).

The protein localises to the cell inner membrane. The enzyme catalyses Fe(3+)(out) + ATP + H2O = Fe(3+)(in) + ADP + phosphate + H(+). Part of the ABC transporter complex FbpABC involved in Fe(3+) ions import. Responsible for energy coupling to the transport system. This chain is Fe(3+) ions import ATP-binding protein FbpC, found in Photorhabdus laumondii subsp. laumondii (strain DSM 15139 / CIP 105565 / TT01) (Photorhabdus luminescens subsp. laumondii).